A 186-amino-acid chain; its full sequence is High mobility group protein B4 (186 aa).

2 DNA-binding regions (HMG box) span residues 9-79 (PKAN…MNYV) and 93-161 (PRRP…ELYR). Residues 77-98 (NYVGKRKKRRKRDPQEPRRPPS) are disordered.

This sequence belongs to the HMGB family.

Its subcellular location is the nucleus. The protein resides in the chromosome. This is High mobility group protein B4 (HMGB4) from Homo sapiens (Human).